The primary structure comprises 409 residues: Nucleoprotein (409 aa).

Disordered regions lie at residues 1-32 (MASGKATGKTDAPAPVIKLGGPRPPKVGSSGN), 46-84 (SPQPKFEGSGVPDNENFKTSQQHGYWRRQARFKPGKGRR), 121-194 (ADVK…GSED), and 238-259 (VDQVFGPRTKGKEGNFGDDKMN). The tract at residues 29 to 160 (SSGNASWFQA…GNFRWDFIPL (132 aa)) is RNA-binding. In terms of domain architecture, CoV N NTD spans 31-156 (GNASWFQAIK…GGPDGNFRWD (126 aa)). A compositionally biased stretch (basic residues) spans 70–84 (YWRRQARFKPGKGRR). Positions 162–179 (RGRSGRSTAASSAASSRP) are enriched in low complexity. Composition is skewed to basic and acidic residues over residues 180-192 (PSREGSRGRRSGS) and 247-259 (KGKEGNFGDDKMN). Residues Ser190 and Ser192 each carry the phosphoserine; by host modification. The region spanning 215–331 (TKAKADEMAH…QCVDGVGTRP (117 aa)) is the CoV N CTD domain. Residues 226-333 (RYCKRTIPPG…VDGVGTRPKD (108 aa)) are dimerization. A disulfide bridge connects residues Cys320 and Cys323. A disordered region spans residues 326 to 409 (GVGTRPKDDE…GDSALGENEL (84 aa)). Residues 341 to 356 (RSSSRPATRTSSPAPR) are compositionally biased toward low complexity. Positions 358-367 (QRLKKEKRPK) are enriched in basic residues. Over residues 368–384 (KQDDEVDKALTSDEERN) the composition is skewed to basic and acidic residues. Residue Thr378 is modified to Phosphothreonine; by host. The residue at position 379 (Ser379) is a Phosphoserine; by host.

It belongs to the gammacoronavirus nucleocapsid protein family. In terms of assembly, homooligomer. Both monomeric and oligomeric forms interact with RNA. Interacts with protein M. Interacts with NSP3; this interaction serves to tether the genome to the newly translated replicase-transcriptase complex at a very early stage of infection. Post-translationally, ADP-ribosylated. The ADP-ribosylation is retained in the virion during infection. Phosphorylated on serine and threonine residues.

The protein resides in the virion. It localises to the host endoplasmic reticulum-Golgi intermediate compartment. It is found in the host Golgi apparatus. Its function is as follows. Packages the positive strand viral genome RNA into a helical ribonucleocapsid (RNP) and plays a fundamental role during virion assembly through its interactions with the viral genome and membrane protein M. Plays an important role in enhancing the efficiency of subgenomic viral RNA transcription as well as viral replication. The protein is Nucleoprotein of Avian infectious bronchitis virus (strain Gray) (IBV).